Here is a 171-residue protein sequence, read N- to C-terminus: NADH-quinone oxidoreductase subunit I 1 (171 aa).

4Fe-4S ferredoxin-type domains lie at 39 to 71 and 81 to 110; these read IVLTRDPDGQERCVACNLCAAVCPVGCIDLSKA and EHFRINFARCIFCGFCEEACPTAAIQLTPD. [4Fe-4S] cluster contacts are provided by C51, C54, C57, C61, C90, C93, C96, and C100.

It belongs to the complex I 23 kDa subunit family. In terms of assembly, NDH-1 is composed of 14 different subunits. Subunits NuoA, H, J, K, L, M, N constitute the membrane sector of the complex. [4Fe-4S] cluster serves as cofactor.

The protein resides in the cell inner membrane. The catalysed reaction is a quinone + NADH + 5 H(+)(in) = a quinol + NAD(+) + 4 H(+)(out). NDH-1 shuttles electrons from NADH, via FMN and iron-sulfur (Fe-S) centers, to quinones in the respiratory chain. The immediate electron acceptor for the enzyme in this species is believed to be ubiquinone. Couples the redox reaction to proton translocation (for every two electrons transferred, four hydrogen ions are translocated across the cytoplasmic membrane), and thus conserves the redox energy in a proton gradient. In Rhodopseudomonas palustris (strain HaA2), this protein is NADH-quinone oxidoreductase subunit I 1.